We begin with the raw amino-acid sequence, 266 residues long: Large ribosomal subunit protein eL8 (266 aa).

Glycyl lysine isopeptide (Lys-Gly) (interchain with G-Cter in SUMO2) cross-links involve residues Lys-11, Lys-20, and Lys-21. Lys-34 carries the post-translational modification N6-acetyllysine. A Glycyl lysine isopeptide (Lys-Gly) (interchain with G-Cter in SUMO2) cross-link involves residue Lys-48. Lys-97 is modified (N6-acetyllysine; alternate). A Glycyl lysine isopeptide (Lys-Gly) (interchain with G-Cter in SUMO2); alternate cross-link involves residue Lys-97. Residue Lys-125 forms a Glycyl lysine isopeptide (Lys-Gly) (interchain with G-Cter in SUMO2) linkage. An N6-acetyllysine modification is found at Lys-217. Lys-245 participates in a covalent cross-link: Glycyl lysine isopeptide (Lys-Gly) (interchain with G-Cter in SUMO2).

This sequence belongs to the eukaryotic ribosomal protein eL8 family. Component of the large ribosomal subunit. Interacts with CRY1. Interacts with DICER1, AGO2, TARBP2, MOV10 and EIF6; they form a large RNA-induced silencing complex (RISC).

Its subcellular location is the cytoplasm. Functionally, component of the large ribosomal subunit. The ribosome is a large ribonucleoprotein complex responsible for the synthesis of proteins in the cell. This chain is Large ribosomal subunit protein eL8 (Rpl7a), found in Rattus norvegicus (Rat).